The chain runs to 813 residues: LPS-assembly protein LptD (813 aa).

The signal sequence occupies residues methionine 1–alanine 22.

Belongs to the LptD family. In terms of assembly, component of the lipopolysaccharide transport and assembly complex. Interacts with LptE and LptA.

The protein resides in the cell outer membrane. In terms of biological role, together with LptE, is involved in the assembly of lipopolysaccharide (LPS) at the surface of the outer membrane. The chain is LPS-assembly protein LptD from Xanthomonas oryzae pv. oryzae (strain MAFF 311018).